The following is a 293-amino-acid chain: uncharacterized protein (293 aa).

Disordered regions lie at residues 20–148 (ELHS…NNNT) and 226–283 (RENQ…GNKN). Acidic residues-rich tracts occupy residues 37-47 (LEDDEEYDDDQ), 56-91 (EEFDYDNDYNDEEFYDEDDDFKEDDDEEEEEEDDEM), and 99-112 (NIDDDDYEEDEEEQ). Low complexity-rich tracts occupy residues 117–148 (TNNNNNTTTTTPYTTYNNNNNNDINNNNNNNT) and 232–283 (NSNS…GNKN).

This is an uncharacterized protein from Dictyostelium discoideum (Social amoeba).